Here is a 240-residue protein sequence, read N- to C-terminus: Probable transcriptional regulatory protein PBPRB1582 (240 aa).

The protein belongs to the TACO1 family.

It localises to the cytoplasm. This Photobacterium profundum (strain SS9) protein is Probable transcriptional regulatory protein PBPRB1582.